The primary structure comprises 414 residues: Signal recognition particle receptor FtsY (414 aa).

GTP is bound by residues Gly-216–Thr-223, Asp-298–Arg-302, and Thr-362–Asp-365.

This sequence belongs to the GTP-binding SRP family. FtsY subfamily. In terms of assembly, part of the signal recognition particle protein translocation system, which is composed of SRP and FtsY. SRP is a ribonucleoprotein composed of Ffh and a 4.5S RNA molecule.

It localises to the cell inner membrane. The protein resides in the cytoplasm. It carries out the reaction GTP + H2O = GDP + phosphate + H(+). In terms of biological role, involved in targeting and insertion of nascent membrane proteins into the cytoplasmic membrane. Acts as a receptor for the complex formed by the signal recognition particle (SRP) and the ribosome-nascent chain (RNC). Interaction with SRP-RNC leads to the transfer of the RNC complex to the Sec translocase for insertion into the membrane, the hydrolysis of GTP by both Ffh and FtsY, and the dissociation of the SRP-FtsY complex into the individual components. The polypeptide is Signal recognition particle receptor FtsY (Haemophilus influenzae (strain ATCC 51907 / DSM 11121 / KW20 / Rd)).